We begin with the raw amino-acid sequence, 321 residues long: Ribonuclease Z (321 aa).

Residues His-62, His-64, Asp-66, His-67, His-139, Asp-209, and His-268 each contribute to the Zn(2+) site. The active-site Proton acceptor is the Asp-66.

The protein belongs to the RNase Z family. As to quaternary structure, homodimer. The cofactor is Zn(2+).

The catalysed reaction is Endonucleolytic cleavage of RNA, removing extra 3' nucleotides from tRNA precursor, generating 3' termini of tRNAs. A 3'-hydroxy group is left at the tRNA terminus and a 5'-phosphoryl group is left at the trailer molecule.. In terms of biological role, zinc phosphodiesterase, which displays some tRNA 3'-processing endonuclease activity. Probably involved in tRNA maturation, by removing a 3'-trailer from precursor tRNA. The polypeptide is Ribonuclease Z (Pseudomonas putida (strain W619)).